The sequence spans 473 residues: Glucose facilitated diffusion protein (473 aa).

The Cytoplasmic portion of the chain corresponds to 1 to 13 (MSSESSQGLVTRL). A helical membrane pass occupies residues 14–34 (ALIAAIGGLLFGYDSAVIAAI). The Periplasmic segment spans residues 35 to 59 (GTPVDIHFIAPRHLSATAAASLSGM). The chain crosses the membrane as a helical span at residues 60–80 (VVVAVLVGCVTGSLLSGWIGI). The Cytoplasmic segment spans residues 81–85 (RFGRR). The chain crosses the membrane as a helical span at residues 86–106 (GGLLMSSICFVAAGFGAALTE). The Periplasmic portion of the chain corresponds to 107-112 (KLFGTG). A helical transmembrane segment spans residues 113 to 133 (GSALQIFCFFRFLAGLGIGVV). The Cytoplasmic portion of the chain corresponds to 134-158 (STLTPTYIAEIAPPDKRGQMVSGQQ). Residues 159–179 (MAIVTGALTGYIFTWLLAHFG) form a helical membrane-spanning segment. The Periplasmic portion of the chain corresponds to 180–187 (SIDWVNAS). The chain crosses the membrane as a helical span at residues 188-208 (GWCWSPASEGLIGIAFLLLLL). Topologically, residues 209–257 (TAPDTPHWLVMKGRHSEASKILARLEPQADPNLTIQKIKAGFDKAMDKS) are cytoplasmic. A helical membrane pass occupies residues 258 to 278 (SAGLFAFGITVVFAGVSVAAF). Residues 279–303 (QQLVGINAVLYYAPQMFQNLGFGAD) lie on the Periplasmic side of the membrane. Residues 304–324 (TALLQTISIGVVNFIFTMIAS) traverse the membrane as a helical segment. The Cytoplasmic segment spans residues 325-335 (RVVDRFGRKPL). Residues 336 to 356 (LIWGALGMAAMMAVLGCCFWF) traverse the membrane as a helical segment. At 357 to 366 (KVGGVLPLAS) the chain is on the periplasmic side. A helical transmembrane segment spans residues 367-387 (VLLYIAVFGMSWGPVCWVVLS). Residues 388–396 (EMFPSSIKG) are Cytoplasmic-facing. A helical transmembrane segment spans residues 397 to 417 (AAMPIAVTGQWLANILVNFLF). Residues 418–429 (KVADGSPALNQT) are Periplasmic-facing. Residues 430-450 (FNHGFSYLVFAALSILGGLIV) traverse the membrane as a helical segment. At 451-473 (ARFVPETKGRSLDEIEEMWRSQK) the chain is on the cytoplasmic side.

This sequence belongs to the major facilitator superfamily. Sugar transporter (TC 2.A.1.1) family.

The protein resides in the cell inner membrane. Functionally, allows uptake of glucose by the cell; allows growth on glucose minimal medium by E.coli cells impaired in glucose transport. Also transports fructose, but has a strong preference for glucose. The chain is Glucose facilitated diffusion protein from Zymomonas mobilis subsp. mobilis (strain ATCC 31821 / ZM4 / CP4).